The sequence spans 249 residues: Vacuolar iron transporter 1 (249 aa).

The Cytoplasmic portion of the chain corresponds to 1 to 36; the sequence is MADGANDGGNPGAEEQQRLLDQHKEAHFTAGEIVRD. Residues 37 to 57 form a helical membrane-spanning segment; sequence IIIGVSDGLTVPFALAAGLSG. Topologically, residues 58–63 are vacuolar; it reads ANASSS. Residues 64-84 traverse the membrane as a helical segment; the sequence is IVLTAGIAEVAAGAISMGLGG. Topologically, residues 85-170 are cytoplasmic; that stretch reads YLAAKSEADN…PKRALQSAFT (86 aa). Residues 90-165 are cytoplasmic metal binding domain (MBD); it reads SEADNYAREL…LEKPDPKRAL (76 aa). Glu102, Glu105, Glu113, Glu116, Met149, and Glu153 together coordinate Fe cation. A helical transmembrane segment spans residues 171 to 191; it reads IAIAYVLGGLVPLIPYMFIPV. Over 192 to 194 the chain is Vacuolar; that stretch reads ARK. A helical transmembrane segment spans residues 195-215; the sequence is AVVASVILTLMALLIFGYAKG. At 216–226 the chain is on the cytoplasmic side; it reads YFTDNKPFKSA. Residues 227-247 traverse the membrane as a helical segment; that stretch reads LQTALIGAIASAAAFGMAKAV. At 248–249 the chain is on the vacuolar side; the sequence is QS.

Belongs to the CCC1 family. In terms of assembly, homodimer. The dimeric interaction is mediated by both the transmembrane domains (TMDs) and the cytoplasmic metal binding domain (MBD).

The protein localises to the vacuole membrane. It carries out the reaction Fe(2+)(in) = Fe(2+)(out). Its activity is regulated as follows. Transport of iron ions is inhibited by zinc ions. In terms of biological role, vacuolar iron transporter involved in the transfer of iron ions from the cytosol to the vacuole for intracellular iron storage. Can transport cobalt ions from the cytosol to the vacuole. This is Vacuolar iron transporter 1 from Eucalyptus grandis (Flooded gum).